A 472-amino-acid chain; its full sequence is Succinate-semialdehyde dehydrogenase [NADP(+)] (472 aa).

Residues 134-135 (WN), 158-161 (KHAS), and 210-211 (GS) contribute to the NADP(+) site. The active-site Proton acceptor is the Glu-232. Leu-233 is an NADP(+) binding site. Cys-266 functions as the Nucleophile in the catalytic mechanism. Residue Glu-363 coordinates NADP(+).

It belongs to the aldehyde dehydrogenase family.

The enzyme catalyses succinate semialdehyde + NADP(+) + H2O = succinate + NADPH + 2 H(+). Its function is as follows. Catalyzes the NADP(+)-dependent oxidation of succinate semialdehyde to succinate. It is believed to be the main source of succinate semialdehyde dehydrogenase activity in Mycobacterium. The sequence is that of Succinate-semialdehyde dehydrogenase [NADP(+)] (gabD1) from Mycolicibacterium paratuberculosis (strain ATCC BAA-968 / K-10) (Mycobacterium paratuberculosis).